The sequence spans 311 residues: MRLVFMGTPDFAVPSLQALVAAGHEFAAVITQPDRPRGRGKKLLPPPVKSTALAAGLPVRQPSDMKDREFLEDLRLLQPELIVVVAFGRILSREILDLPARGCVNLHASLLPRYRGAAPIHRAVMNGEVETGVTTMWMAPQLDAGDIILQEKLPIPPEATTGEIHDRLAEVGAGLLVHTLELIAASRAPRLPQDEALATYAPPLKPEEEVIHWEQPAQVIYNQIRGLNPWPGAYTLRSGERLKIYGARLTDPSAIGRAGRVVEVGREGFVVQAGTGRLLVTSVQPPGKKIMPASAYLQGYPMVPGEILGCV.

109 to 112 (SLLP) is a binding site for (6S)-5,6,7,8-tetrahydrofolate.

The protein belongs to the Fmt family.

It catalyses the reaction L-methionyl-tRNA(fMet) + (6R)-10-formyltetrahydrofolate = N-formyl-L-methionyl-tRNA(fMet) + (6S)-5,6,7,8-tetrahydrofolate + H(+). Its function is as follows. Attaches a formyl group to the free amino group of methionyl-tRNA(fMet). The formyl group appears to play a dual role in the initiator identity of N-formylmethionyl-tRNA by promoting its recognition by IF2 and preventing the misappropriation of this tRNA by the elongation apparatus. The chain is Methionyl-tRNA formyltransferase from Moorella thermoacetica (strain ATCC 39073 / JCM 9320).